A 261-amino-acid chain; its full sequence is RING finger protein 208 (261 aa).

A disordered region spans residues 83 to 106 (PALEGAPHTPPLPRRPRKGSSELG). Residue Ser102 is modified to Phosphoserine. Residues 143–190 (CPTCGHSYNVTQRRPRVLSCLHSVCEQCLQILYESCPKYKFISCPTCR) form an RING-type zinc finger.

The protein is RING finger protein 208 (RNF208) of Homo sapiens (Human).